Consider the following 248-residue polypeptide: uncharacterized protein (248 aa).

Residues 33-57 (EWQLSEGQKRCEEINRQNRQLRVEK) adopt a coiled-coil conformation.

This is an uncharacterized protein from Escherichia coli (strain K12).